The sequence spans 210 residues: Thymidylate kinase (210 aa).

10–17 is a binding site for ATP; the sequence is GPEGAGKS.

The protein belongs to the thymidylate kinase family.

It carries out the reaction dTMP + ATP = dTDP + ADP. In terms of biological role, phosphorylation of dTMP to form dTDP in both de novo and salvage pathways of dTTP synthesis. This Pseudomonas fluorescens (strain ATCC BAA-477 / NRRL B-23932 / Pf-5) protein is Thymidylate kinase.